The sequence spans 547 residues: Solute carrier family 22 member 7 (547 aa).

Transmembrane regions (helical) follow at residues 21–41 (VALL…PIFL), 145–165 (ATST…GYLS), 173–193 (LLLV…ASVS), 203–223 (LTGT…LEWL), 233–253 (VLSS…GYLI), 258–278 (WLLL…WWVP), 345–365 (ISLC…GLSL), 374–396 (VYQT…YLSV), 403–423 (LTLA…LLVS), 431–451 (TALA…AYLF), 465–485 (MGLT…AALL), and 492–512 (LPKL…LLLP). Positions 521-547 (ETIQDVERKSAPSSLQEEEMPMKQVQD) are disordered.

This sequence belongs to the major facilitator (TC 2.A.1) superfamily. Organic cation transporter (TC 2.A.1.19) family.

It localises to the basolateral cell membrane. The protein resides in the apical cell membrane. The protein localises to the cell membrane. It carries out the reaction orotate(out) + L-glutamate(in) = orotate(in) + L-glutamate(out). The enzyme catalyses 3',5'-cyclic GMP(in) = 3',5'-cyclic GMP(out). It catalyses the reaction GMP(in) = GMP(out). The catalysed reaction is 2'-deoxyguanosine(in) = 2'-deoxyguanosine(out). It carries out the reaction GDP(in) = GDP(out). The enzyme catalyses guanosine(in) = guanosine(out). It catalyses the reaction GTP(in) = GTP(out). The catalysed reaction is 3',5'-cyclic AMP(in) = 3',5'-cyclic AMP(out). It carries out the reaction creatinine(in) = creatinine(out). The enzyme catalyses prostaglandin E2(out) = prostaglandin E2(in). It catalyses the reaction 2-oxoglutarate(in) = 2-oxoglutarate(out). The catalysed reaction is glutarate(in) = glutarate(out). It carries out the reaction urate(out) = urate(in). The enzyme catalyses estrone 3-sulfate(out) = estrone 3-sulfate(in). Functions as a Na(+)-independent bidirectional multispecific transporter. Contributes to the renal and hepatic elimination of endogenous organic compounds from the systemic circulation into the urine and bile, respectively. Capable of transporting a wide range of purine and pyrimidine nucleobases, nucleosides and nucleotides, with cGMP, 2'deoxyguanosine and GMP being the preferred substrates. Functions as a pH- and chloride-independent cGMP bidirectional facilitative transporter that can regulate both intracellular and extracellular levels of cGMP and may be involved in cGMP signaling pathways. Mediates orotate/glutamate bidirectional exchange and most likely display a physiological role in hepatic release of glutamate into the blood. Involved in renal secretion and possible reabsorption of creatinine. Able to uptake prostaglandin E2 (PGE2) and may contribute to PGE2 renal excretion. Also transports alpha-ketoglutarate and urate. Apart from the orotate/glutamate exchange, the counterions for the uptake of other SLC22A7/OAT2 substrates remain to be identified. This chain is Solute carrier family 22 member 7 (SLC22A7), found in Sus scrofa (Pig).